Here is a 207-residue protein sequence, read N- to C-terminus: Large ribosomal subunit protein uL4 (207 aa).

Positions 49–73 (AKKRGEVSGGGKKPWKQKGGGRARA) are disordered.

It belongs to the universal ribosomal protein uL4 family. In terms of assembly, part of the 50S ribosomal subunit.

In terms of biological role, one of the primary rRNA binding proteins, this protein initially binds near the 5'-end of the 23S rRNA. It is important during the early stages of 50S assembly. It makes multiple contacts with different domains of the 23S rRNA in the assembled 50S subunit and ribosome. Its function is as follows. Forms part of the polypeptide exit tunnel. This is Large ribosomal subunit protein uL4 from Helicobacter hepaticus (strain ATCC 51449 / 3B1).